The following is a 101-amino-acid chain: Small ribosomal subunit protein uS14 (101 aa).

The protein belongs to the universal ribosomal protein uS14 family. Part of the 30S ribosomal subunit. Contacts proteins S3 and S10.

In terms of biological role, binds 16S rRNA, required for the assembly of 30S particles and may also be responsible for determining the conformation of the 16S rRNA at the A site. The sequence is that of Small ribosomal subunit protein uS14 from Pasteurella multocida (strain Pm70).